The following is a 193-amino-acid chain: Rho-related protein racF2 (193 aa).

Residue 10 to 17 (GDGAVGKT) participates in GTP binding. Positions 32–40 (YLPTVFDNY) match the Effector region motif. Residues 57-61 (DTAGQ) and 115-118 (TKQD) contribute to the GTP site. Cys-190 is subject to Cysteine methyl ester. A lipid anchor (S-geranylgeranyl cysteine) is attached at Cys-190. The propeptide at 191–193 (TIM) is removed in mature form.

This sequence belongs to the small GTPase superfamily. Rho family.

Its subcellular location is the cell membrane. The chain is Rho-related protein racF2 (racF2) from Dictyostelium discoideum (Social amoeba).